The following is a 318-amino-acid chain: MTTNDDDHAAERNTMSMNYELAATLSDEEQRARKGKAKIVCKEEDHVFIKKKEKYEEESEKREFFSHVPRKIRPALRYPQPNFENPNGASSSLNLPFEEDYYMAEYYKKTETINPPNPYHQWSPSSFLTEYTHPRMLEVLHRCGFNRPVVTCYSRTAREMRWWLRQVMKDMRAEDLTLILEKTLSTTDVITTTHGRFSMHFNRLISNDFLKPEERSILEEDTYNDETMGVGAILVDQRSQKWSVILKRWGQNYFLSCGWNDVVKANKLKAGDDICLWAFRCDGVLCFAMRQWRGILCFALVPPLTLRQSSSSNARRLC.

Positions F201–R293 form a DNA-binding region, TF-B3.

It localises to the nucleus. This is B3 domain-containing protein At1g05930 from Arabidopsis thaliana (Mouse-ear cress).